We begin with the raw amino-acid sequence, 209 residues long: Adenylate kinase (209 aa).

59 to 64 (GSGKRT) serves as a coordination point for ATP. The NMP stretch occupies residues 79–108 (SSGQVLTRGVESGSETSQLAHSYVSRGERV). AMP contacts are provided by residues serine 80, 106 to 108 (ERV), 135 to 138 (GYPR), and glutamine 142. The LID stretch occupies residues 172–205 (HRRYDPATNKXYHMLDNPPPGGRCRVMRTAPAEG). Residue arginine 173 participates in ATP binding.

The protein belongs to the adenylate kinase family. As to quaternary structure, monomer.

It localises to the cytoplasm. The catalysed reaction is AMP + ATP = 2 ADP. Functionally, catalyzes the reversible transfer of the terminal phosphate group between ATP and AMP. Plays an important role in cellular energy homeostasis and in adenine nucleotide metabolism. The polypeptide is Adenylate kinase (Trypanosoma brucei rhodesiense).